Consider the following 751-residue polypeptide: Lysine decarboxylase LdcA (751 aa).

The protein belongs to the Orn/Lys/Arg decarboxylase class-I family. In terms of assembly, homodecamer.

It catalyses the reaction L-lysine + H(+) = cadaverine + CO2. Plays an essential role in lysine utilization by acting as a lysine decarboxylase. This Pseudomonas aeruginosa (strain ATCC 15692 / DSM 22644 / CIP 104116 / JCM 14847 / LMG 12228 / 1C / PRS 101 / PAO1) protein is Lysine decarboxylase LdcA.